Consider the following 387-residue polypeptide: Polyphosphate kinase (387 aa).

Mg(2+) contacts are provided by arginine 347 and arginine 377.

It belongs to the polyphosphate kinase 1 (PPK1) family. The cofactor is Mg(2+). In terms of processing, an intermediate of this reaction is the autophosphorylated ppk in which a phosphate is covalently linked to a histidine residue through a N-P bond.

It catalyses the reaction [phosphate](n) + ATP = [phosphate](n+1) + ADP. Its function is as follows. Catalyzes the reversible transfer of the terminal phosphate of ATP to form a long-chain polyphosphate (polyP). The polypeptide is Polyphosphate kinase (ppk) (Aphanizomenon baltica).